The primary structure comprises 78 residues: Large ribosomal subunit protein bL28 (78 aa).

The protein belongs to the bacterial ribosomal protein bL28 family.

This Psychrobacter sp. (strain PRwf-1) protein is Large ribosomal subunit protein bL28.